The sequence spans 64 residues: Large ribosomal subunit protein uL29 (64 aa).

It belongs to the universal ribosomal protein uL29 family.

The chain is Large ribosomal subunit protein uL29 from Porphyromonas gingivalis (strain ATCC 33277 / DSM 20709 / CIP 103683 / JCM 12257 / NCTC 11834 / 2561).